The chain runs to 1032 residues: Integrin alpha-4 (1032 aa).

Positions 1–34 (MIRDLGKVGKVSLLLDHIWTGILLYTVILTPADC) are cleaved as a signal peptide. Topologically, residues 35–974 (YNIDESSPML…LHNLKPKKHV (940 aa)) are extracellular. FG-GAP repeat units lie at residues 36–100 (NIDE…PNRT), 113–177 (KCGK…TELS), 186–237 (DHVR…TIKS), 238–291 (YVDL…EKQL), 292–351 (TILF…GAME), 353–411 (LKFE…GITP), and 415–477 (QRLQ…LPST). 2 N-linked (GlcNAc...) asparagine glycosylation sites follow: asparagine 81 and asparagine 98. Cystine bridges form between cysteine 91–cysteine 101, cysteine 144–cysteine 165, and cysteine 183–cysteine 198. N-linked (GlcNAc...) asparagine glycosylation is present at asparagine 229. Residues aspartate 314, asparagine 316, aspartate 318, leucine 320, aspartate 322, aspartate 376, aspartate 378, aspartate 380, aspartate 384, aspartate 438, aspartate 440, asparagine 442, tyrosine 444, and aspartate 446 each coordinate Ca(2+). N-linked (GlcNAc...) asparagine glycosylation occurs at asparagine 479. Cysteine 485 and cysteine 494 form a disulfide bridge. 5 N-linked (GlcNAc...) asparagine glycosylation sites follow: asparagine 496, asparagine 517, asparagine 537, asparagine 626, and asparagine 660. 2 cysteine pairs are disulfide-bonded: cysteine 500–cysteine 556 and cysteine 622–cysteine 627. A disulfide bridge links cysteine 698 with cysteine 712. N-linked (GlcNAc...) asparagine glycans are attached at residues asparagine 746 and asparagine 857. 2 disulfide bridges follow: cysteine 853/cysteine 889 and cysteine 896/cysteine 901. Residues 975–998 (IYMIIGISLLLGILLFSLLTYILW) form a helical membrane-spanning segment. Over 999 to 1032 (KVGFFRRKYQPIGTEETSRRESWNYLNKDEKEVK) the chain is Cytoplasmic. A GFFKR motif motif is present at residues 1001–1005 (GFFRR).

This sequence belongs to the integrin alpha chain family. As to quaternary structure, heterodimer of an alpha and a beta subunit.

The protein resides in the membrane. Its function is as follows. Fibronectin and V-CAM adhesion receptor. The sequence is that of Integrin alpha-4 (itga4) from Xenopus laevis (African clawed frog).